A 442-amino-acid chain; its full sequence is Small RNA 2'-O-methyltransferase (442 aa).

Positions 125 and 151 each coordinate S-adenosyl-L-methionine. Residues glutamate 209, glutamate 212, histidine 213, and histidine 260 each contribute to the Mg(2+) site.

This sequence belongs to the methyltransferase superfamily. HEN1 family. It depends on Mg(2+) as a cofactor. Broadly expressed in the germline and somatic tissues in both hermaphrodites and males.

It localises to the cytoplasm. The protein resides in the nucleus. It is found in the nucleoplasm. The protein localises to the cytoplasmic granule. The enzyme catalyses small RNA 3'-end nucleotide + S-adenosyl-L-methionine = small RNA 3'-end 2'-O-methylnucleotide + S-adenosyl-L-homocysteine + H(+). Methyltransferase that adds a 2'-O-methyl group at the 3'-end of PIWI-interacting RNAs (piRNAs) and small interfering RNAs (siRNAs) which are classes of regulatory RNAs that are involved in gene silencing in endogenous RNA interference (RNAi) pathways. Methylation protects the 3'-end of small RNAs from tailing and trimming and could constitute a recognition signal for appropriate argonaute machineries. Methylates and stabilizes 26G-siRNAs (a class of 26 nucleotide siRNAs that possess a monophosphorylated guanine residue at the 5'-end) when they are bound by argonaute protein ergo-1. This occurs in the female germline and embryo, but not in the male germline. Does not methylate 26G-siRNAs bound by argonaute proteins alg-3 or alg-4. Methylates and stabilizes 21U-piRNAs, which are a class of 21 nucleotide piRNAs that possess a uracil residue at the 5'-end, in the male and female germline. In addition, may play a role in exogenous RNAi (exoRNAi) pathways in the germline. The chain is Small RNA 2'-O-methyltransferase from Caenorhabditis elegans.